Consider the following 426-residue polypeptide: Tachykinins (426 aa).

Residues 1–116 constitute a propeptide that is removed on maturation; the sequence is MQCDFRVHQD…IEDNLSHEFE (116 aa). Residue R127 is modified to Arginine amide. Residues 131–145 constitute a propeptide that is removed on maturation; it reads GYLTPDFEDSYFRDE. At R156 the chain carries Arginine amide. Residues 160–167 constitute a propeptide that is removed on maturation; it reads VVSDDDYY. An Arginine amide modification is found at R178. The propeptide occupies 182-235; sequence SLEEVLGEIEKKAAMDYYDTRDKKTYVFEYPEDYEKRLLASIRGKLKEFPMEWE. R246 carries the arginine amide modification. The propeptide occupies 250-259; sequence SLLDEIEELE. An Arginine amide modification is found at R270. Positions 274–291 are excised as a propeptide; it reads NALENYIDYYLDPDMDFD. Residues 299 to 329 form a disordered region; the sequence is QGMRGKKDSDKRAPMGFQGMRGKRNTGQRFD. The residue at position 302 (R302) is an Arginine amide. A propeptide spanning residues 306-308 is cleaved from the precursor; the sequence is DSD. R319 carries the post-translational modification Arginine amide. A propeptide spanning residues 323 to 358 is cleaved from the precursor; the sequence is NTGQRFDTGINFNIRSSNEYQGTNNRRNALASCQLE. An arginine amide mark is found at R369 and R386. The propeptide occupies 390–426; that stretch reads WATAPYEDDSPFISVFDNTERIGVDGDSPAILGNSIS.

Belongs to the tachykinin family. As to expression, tachykinins (TK) are expressed throughout the nervous system. APMGFQGMR-amide is also expressed in the retrocerebral complex (at protein level).

It is found in the secreted. Functionally, tachykinins are active peptides which excite neurons, evoke behavioral responses, are potent vasodilators and secretagogues, and contract (directly or indirectly) many smooth muscles. The chain is Tachykinins from Camponotus floridanus (Florida carpenter ant).